A 360-amino-acid polypeptide reads, in one-letter code: UDP-N-acetylglucosamine--N-acetylmuramyl-(pentapeptide) pyrophosphoryl-undecaprenol N-acetylglucosamine transferase (360 aa).

UDP-N-acetyl-alpha-D-glucosamine-binding positions include 17–19, N130, R166, S200, I247, and Q291; that span reads TAG.

The protein belongs to the glycosyltransferase 28 family. MurG subfamily.

It is found in the cell membrane. The catalysed reaction is di-trans,octa-cis-undecaprenyl diphospho-N-acetyl-alpha-D-muramoyl-L-alanyl-D-glutamyl-meso-2,6-diaminopimeloyl-D-alanyl-D-alanine + UDP-N-acetyl-alpha-D-glucosamine = di-trans,octa-cis-undecaprenyl diphospho-[N-acetyl-alpha-D-glucosaminyl-(1-&gt;4)]-N-acetyl-alpha-D-muramoyl-L-alanyl-D-glutamyl-meso-2,6-diaminopimeloyl-D-alanyl-D-alanine + UDP + H(+). The protein operates within cell wall biogenesis; peptidoglycan biosynthesis. In terms of biological role, cell wall formation. Catalyzes the transfer of a GlcNAc subunit on undecaprenyl-pyrophosphoryl-MurNAc-pentapeptide (lipid intermediate I) to form undecaprenyl-pyrophosphoryl-MurNAc-(pentapeptide)GlcNAc (lipid intermediate II). This chain is UDP-N-acetylglucosamine--N-acetylmuramyl-(pentapeptide) pyrophosphoryl-undecaprenol N-acetylglucosamine transferase, found in Corynebacterium efficiens (strain DSM 44549 / YS-314 / AJ 12310 / JCM 11189 / NBRC 100395).